The primary structure comprises 117 residues: Fluoride-specific ion channel FluC 2 (117 aa).

4 helical membrane passes run Met-1–Ile-21, Ile-33–Gly-53, Met-61–Ser-81, and Ile-94–Gly-114. Positions 71 and 74 each coordinate Na(+).

The protein belongs to the fluoride channel Fluc/FEX (TC 1.A.43) family.

It is found in the cell membrane. The catalysed reaction is fluoride(in) = fluoride(out). With respect to regulation, na(+) is not transported, but it plays an essential structural role and its presence is essential for fluoride channel function. In terms of biological role, fluoride-specific ion channel. Important for reducing fluoride concentration in the cell, thus reducing its toxicity. This chain is Fluoride-specific ion channel FluC 2, found in Staphylococcus epidermidis (strain ATCC 35984 / DSM 28319 / BCRC 17069 / CCUG 31568 / BM 3577 / RP62A).